A 302-amino-acid polypeptide reads, in one-letter code: Sulfate adenylyltransferase subunit 2 (302 aa).

It belongs to the PAPS reductase family. CysD subfamily. In terms of assembly, heterodimer composed of CysD, the smaller subunit, and CysN.

The enzyme catalyses sulfate + ATP + H(+) = adenosine 5'-phosphosulfate + diphosphate. The protein operates within sulfur metabolism; hydrogen sulfide biosynthesis; sulfite from sulfate: step 1/3. Functionally, with CysN forms the ATP sulfurylase (ATPS) that catalyzes the adenylation of sulfate producing adenosine 5'-phosphosulfate (APS) and diphosphate, the first enzymatic step in sulfur assimilation pathway. APS synthesis involves the formation of a high-energy phosphoric-sulfuric acid anhydride bond driven by GTP hydrolysis by CysN coupled to ATP hydrolysis by CysD. The protein is Sulfate adenylyltransferase subunit 2 of Proteus mirabilis (strain HI4320).